Here is a 549-residue protein sequence, read N- to C-terminus: Chaperonin GroEL (549 aa).

ATP contacts are provided by residues 30–33 (TLGP), lysine 51, 87–91 (DGTTT), glycine 415, 479–481 (NAA), and aspartate 495.

It belongs to the chaperonin (HSP60) family. Forms a cylinder of 14 subunits composed of two heptameric rings stacked back-to-back. Interacts with the co-chaperonin GroES.

It is found in the cytoplasm. It catalyses the reaction ATP + H2O + a folded polypeptide = ADP + phosphate + an unfolded polypeptide.. Functionally, together with its co-chaperonin GroES, plays an essential role in assisting protein folding. The GroEL-GroES system forms a nano-cage that allows encapsulation of the non-native substrate proteins and provides a physical environment optimized to promote and accelerate protein folding. In Stenotrophomonas maltophilia (strain K279a), this protein is Chaperonin GroEL.